Reading from the N-terminus, the 152-residue chain is Ribosome maturation factor RimP (152 aa).

Belongs to the RimP family.

The protein localises to the cytoplasm. Its function is as follows. Required for maturation of 30S ribosomal subunits. The chain is Ribosome maturation factor RimP from Proteus mirabilis (strain HI4320).